A 403-amino-acid polypeptide reads, in one-letter code: Argininosuccinate synthase (403 aa).

ATP-binding positions include 12-20 (AYSGGLDTS) and A39. L-citrulline-binding residues include Y90 and S95. An ATP-binding site is contributed by G120. Residues T122, N126, and D127 each coordinate L-aspartate. N126 is a binding site for L-citrulline. L-citrulline contacts are provided by R130, S182, S191, E267, and Y279.

This sequence belongs to the argininosuccinate synthase family. Type 1 subfamily. As to quaternary structure, homotetramer.

Its subcellular location is the cytoplasm. The enzyme catalyses L-citrulline + L-aspartate + ATP = 2-(N(omega)-L-arginino)succinate + AMP + diphosphate + H(+). It functions in the pathway amino-acid biosynthesis; L-arginine biosynthesis; L-arginine from L-ornithine and carbamoyl phosphate: step 2/3. This is Argininosuccinate synthase from Vesicomyosocius okutanii subsp. Calyptogena okutanii (strain HA).